Reading from the N-terminus, the 116-residue chain is Large ribosomal subunit protein bL19 (116 aa).

Belongs to the bacterial ribosomal protein bL19 family.

Its function is as follows. This protein is located at the 30S-50S ribosomal subunit interface and may play a role in the structure and function of the aminoacyl-tRNA binding site. This chain is Large ribosomal subunit protein bL19, found in Lactobacillus gasseri (strain ATCC 33323 / DSM 20243 / BCRC 14619 / CIP 102991 / JCM 1131 / KCTC 3163 / NCIMB 11718 / NCTC 13722 / AM63).